Consider the following 253-residue polypeptide: 5'/3'-nucleotidase SurE (253 aa).

Residues Asp-8, Asp-9, Ser-39, and Asn-92 each contribute to the a divalent metal cation site.

This sequence belongs to the SurE nucleotidase family. It depends on a divalent metal cation as a cofactor.

Its subcellular location is the cytoplasm. The catalysed reaction is a ribonucleoside 5'-phosphate + H2O = a ribonucleoside + phosphate. It catalyses the reaction a ribonucleoside 3'-phosphate + H2O = a ribonucleoside + phosphate. It carries out the reaction [phosphate](n) + H2O = [phosphate](n-1) + phosphate + H(+). Functionally, nucleotidase with a broad substrate specificity as it can dephosphorylate various ribo- and deoxyribonucleoside 5'-monophosphates and ribonucleoside 3'-monophosphates with highest affinity to 3'-AMP. Also hydrolyzes polyphosphate (exopolyphosphatase activity) with the preference for short-chain-length substrates (P20-25). Might be involved in the regulation of dNTP and NTP pools, and in the turnover of 3'-mononucleotides produced by numerous intracellular RNases (T1, T2, and F) during the degradation of various RNAs. The protein is 5'/3'-nucleotidase SurE of Shigella dysenteriae serotype 1 (strain Sd197).